The sequence spans 766 residues: Semaphorin-4E (766 aa).

The first 24 residues, 1-24 (MMSLLAVLCVLYVWSPAMLTGGLG), serve as a signal peptide directing secretion. Residues 25 to 664 (STLDSLPRKT…LHHVKEKERT (640 aa)) are Extracellular-facing. The region spanning 27–499 (LDSLPRKTVP…SEVGVVQLSI (473 aa)) is the Sema domain. Asparagine 52 is a glycosylation site (N-linked (GlcNAc...) asparagine). 4 cysteine pairs are disulfide-bonded: cysteine 100–cysteine 111, cysteine 129–cysteine 138, cysteine 261–cysteine 373, and cysteine 285–cysteine 329. A glycan (N-linked (GlcNAc...) asparagine) is linked at asparagine 433. The 52-residue stretch at 501–552 (ECGRYQTCLDCVLARDPHCGWDLDTEHCATINSIHRTRSSTVIQSLNDGDAS) folds into the PSI domain. 2 cysteine pairs are disulfide-bonded: cysteine 502-cysteine 519 and cysteine 511-cysteine 528. Positions 555–640 (PAIGVSKPVN…QRKYQTQHVA (86 aa)) constitute an Ig-like C2-type domain. N-linked (GlcNAc...) asparagine glycosylation is found at asparagine 564 and asparagine 612. Cysteine 577 and cysteine 623 are joined by a disulfide. Residues 665-685 (LVAMVVILSLVLAALLIWNLY) form a helical membrane-spanning segment. Over 686 to 766 (KGHLSLPCLH…LKYIDDESEI (81 aa)) the chain is Cytoplasmic. The tract at residues 724–750 (FNSNNNHANDQRYSSSRETDRLSTTAG) is disordered.

Belongs to the semaphorin family.

The protein localises to the membrane. This chain is Semaphorin-4E (sema4e), found in Danio rerio (Zebrafish).